The following is a 312-amino-acid chain: NADPH-dependent alpha-keto amide reductase (312 aa).

NADPH-binding residues include G25, T26, R27, and D59. Catalysis depends on proton donor residues Y64 and H122. The residue at position 123 (S123) is a Phosphoserine. 10 residues coordinate NADPH: S157, Q179, S208, L210, T257, T258, S259, S260, K261, and R264.

This sequence belongs to the aldo/keto reductase family. In terms of assembly, monomer. The N-terminus is blocked.

Its subcellular location is the cytoplasm. It localises to the nucleus. Functionally, reduces aromatic alpha-keto amides, aliphatic and aromatic alpha-keto esters, but not beta-keto esters. This is NADPH-dependent alpha-keto amide reductase from Saccharomyces cerevisiae (strain ATCC 204508 / S288c) (Baker's yeast).